The sequence spans 508 residues: Photosystem II CP47 reaction center protein (508 aa).

6 helical membrane passes run 21–36 (AVHIMHTALVAGWAGS), 101–115 (IVFSGLCFLAAIWHW), 140–156 (GIHLFLSGVACFGFGTF), 203–218 (IAAGTLGILAGLFHLS), 237–252 (VLSSSIAAVFFAAFVV), and 457–472 (SFALLFFFGHIWHGAR).

Belongs to the PsbB/PsbC family. PsbB subfamily. As to quaternary structure, PSII is composed of 1 copy each of membrane proteins PsbA, PsbB, PsbC, PsbD, PsbE, PsbF, PsbH, PsbI, PsbJ, PsbK, PsbL, PsbM, PsbT, PsbX, PsbY, PsbZ, Psb30/Ycf12, at least 3 peripheral proteins of the oxygen-evolving complex and a large number of cofactors. It forms dimeric complexes. Binds multiple chlorophylls. PSII binds additional chlorophylls, carotenoids and specific lipids. is required as a cofactor.

It localises to the plastid. The protein localises to the chloroplast thylakoid membrane. Its function is as follows. One of the components of the core complex of photosystem II (PSII). It binds chlorophyll and helps catalyze the primary light-induced photochemical processes of PSII. PSII is a light-driven water:plastoquinone oxidoreductase, using light energy to abstract electrons from H(2)O, generating O(2) and a proton gradient subsequently used for ATP formation. The protein is Photosystem II CP47 reaction center protein of Citrus sinensis (Sweet orange).